We begin with the raw amino-acid sequence, 181 residues long: Large ribosomal subunit protein uL30 (181 aa).

It belongs to the universal ribosomal protein uL30 family. In terms of assembly, part of the 50S ribosomal subunit.

The polypeptide is Large ribosomal subunit protein uL30 (Hyperthermus butylicus (strain DSM 5456 / JCM 9403 / PLM1-5)).